We begin with the raw amino-acid sequence, 117 residues long: Large ribosomal subunit protein uL18 (117 aa).

This sequence belongs to the universal ribosomal protein uL18 family. In terms of assembly, part of the 50S ribosomal subunit; part of the 5S rRNA/L5/L18/L25 subcomplex. Contacts the 5S and 23S rRNAs.

Functionally, this is one of the proteins that bind and probably mediate the attachment of the 5S RNA into the large ribosomal subunit, where it forms part of the central protuberance. The protein is Large ribosomal subunit protein uL18 of Phytoplasma australiense.